The sequence spans 389 residues: Succinate--CoA ligase [ADP-forming] subunit beta (389 aa).

The region spanning 9–244 is the ATP-grasp domain; that stretch reads KEILRKFGVA…LDEEDPAEVE (236 aa). Residues K46, 53-55, E99, A102, and E107 contribute to the ATP site; that span reads GRG. Mg(2+)-binding residues include N199 and D213. Residues N264 and 321-323 contribute to the substrate site; that span reads GIM.

The protein belongs to the succinate/malate CoA ligase beta subunit family. In terms of assembly, heterotetramer of two alpha and two beta subunits. Requires Mg(2+) as cofactor.

It carries out the reaction succinate + ATP + CoA = succinyl-CoA + ADP + phosphate. It catalyses the reaction GTP + succinate + CoA = succinyl-CoA + GDP + phosphate. It participates in carbohydrate metabolism; tricarboxylic acid cycle; succinate from succinyl-CoA (ligase route): step 1/1. In terms of biological role, succinyl-CoA synthetase functions in the citric acid cycle (TCA), coupling the hydrolysis of succinyl-CoA to the synthesis of either ATP or GTP and thus represents the only step of substrate-level phosphorylation in the TCA. The beta subunit provides nucleotide specificity of the enzyme and binds the substrate succinate, while the binding sites for coenzyme A and phosphate are found in the alpha subunit. This chain is Succinate--CoA ligase [ADP-forming] subunit beta, found in Paraburkholderia xenovorans (strain LB400).